Reading from the N-terminus, the 74-residue chain is RNA-binding protein Hfq (74 aa).

The Sm domain maps to 9-69 (DQFLNQLRKE…ISTFAPQKNV (61 aa)).

It belongs to the Hfq family. Homohexamer.

RNA chaperone that binds small regulatory RNA (sRNAs) and mRNAs to facilitate mRNA translational regulation in response to envelope stress, environmental stress and changes in metabolite concentrations. Also binds with high specificity to tRNAs. This Anoxybacillus flavithermus (strain DSM 21510 / WK1) protein is RNA-binding protein Hfq.